A 308-amino-acid polypeptide reads, in one-letter code: Cytochrome c biogenesis protein CcsA (308 aa).

The next 7 membrane-spanning stretches (helical) occupy residues Ile17–Cys37, Gly43–Gly63, Leu70–Phe90, Met142–Ile162, Val213–Asn233, Glu246–Leu260, and Ala274–Leu294.

Belongs to the CcmF/CycK/Ccl1/NrfE/CcsA family. In terms of assembly, may interact with Ccs1.

The protein localises to the plastid. The protein resides in the chloroplast thylakoid membrane. Required during biogenesis of c-type cytochromes (cytochrome c6 and cytochrome f) at the step of heme attachment. In Nymphaea alba (White water-lily), this protein is Cytochrome c biogenesis protein CcsA.